Reading from the N-terminus, the 189-residue chain is Peptidyl-tRNA hydrolase (189 aa).

Histidine 14 is a tRNA binding site. Histidine 19 functions as the Proton acceptor in the catalytic mechanism. Tyrosine 64, asparagine 66, and asparagine 112 together coordinate tRNA.

The protein belongs to the PTH family. In terms of assembly, monomer.

Its subcellular location is the cytoplasm. It carries out the reaction an N-acyl-L-alpha-aminoacyl-tRNA + H2O = an N-acyl-L-amino acid + a tRNA + H(+). Functionally, hydrolyzes ribosome-free peptidyl-tRNAs (with 1 or more amino acids incorporated), which drop off the ribosome during protein synthesis, or as a result of ribosome stalling. Catalyzes the release of premature peptidyl moieties from peptidyl-tRNA molecules trapped in stalled 50S ribosomal subunits, and thus maintains levels of free tRNAs and 50S ribosomes. In Chlorobium phaeobacteroides (strain BS1), this protein is Peptidyl-tRNA hydrolase.